The primary structure comprises 747 residues: DNA repair and recombination protein RAD54-like (747 aa).

Residues 1-42 are disordered; it reads MRRSLAPSQLARRKPEDRSSDDEDWQPGTVTPKKRKSSSETQ. A required for chromatin remodeling, strand pairing activities and coupling of ATPase activity region spans residues 2–9; it reads RRSLAPSQ. Residue S38 is modified to Phosphoserine. Residues 170–345 form the Helicase ATP-binding domain; sequence SRRIPGSHGC…FSLVHFVNSG (176 aa). 183 to 190 contacts ATP; sequence DEMGLGKT. The short motif at 296–299 is the DEGH box element; that stretch reads DEGH. In terms of domain architecture, Helicase C-terminal spans 500-653; that stretch reads VLDYILAVTR…CVVDEEQDVE (154 aa). K515 carries the N6-acetyllysine modification. S572 carries the post-translational modification Phosphoserine; by NEK1.

It belongs to the SNF2/RAD54 helicase family. Homohexamer. Interacts (via N-terminus) with RAD51. Interacts with NAP1L1. Interacts with BRD9; this interaction orchestrates RAD51-RAD54 complex formation. Acetylated. Acetylation promotes interaction with BRD9, and subsequently with RAD54, which is essential for homologous recombination (HR). In terms of processing, phosphorylated. Phosphorylation at Ser-572 by NEK1 specifically in G2 phase allows efficient removal of RAD51 filaments from DNA. As to expression, hardly detectable in most tissues. Dramatically increased in thymus, spleen and testis.

It is found in the nucleus. It carries out the reaction ATP + H2O = ADP + phosphate + H(+). Functionally, plays an essential role in homologous recombination (HR) which is a major pathway for repairing DNA double-strand breaks (DSBs), single-stranded DNA (ssDNA) gaps, and stalled or collapsed replication forks. Acts as a molecular motor during the homology search and guides RAD51 ssDNA along a donor dsDNA thereby changing the homology search from the diffusion-based mechanism to a motor-guided mechanism. Plays also an essential role in RAD51-mediated synaptic complex formation which consists of three strands encased in a protein filament formed once homology is recognized. Once DNA strand exchange occured, dissociates RAD51 from nucleoprotein filaments formed on dsDNA. Deficiency also resulted in an increased frequency of end-to-end chromosome fusions involving telomeres compared to the controls, suggesting a putative role in telomere capping. Non-homologous end joining (NHEJ) and homologous recombination (HR) represent the two major pathways of DNA double-strand break (DSB) repair in eukaryotic cells. LIG4 and RAD54L cooperate to support cellular proliferation, repair spontaneous DSBs, and prevent chromosome and single chromatid aberrations. In Mus musculus (Mouse), this protein is DNA repair and recombination protein RAD54-like (Rad54l).